Reading from the N-terminus, the 472-residue chain is Adenosylhomocysteinase (472 aa).

The substrate site is built by Thr-61, Asp-136, and Glu-196. 197–199 is a binding site for NAD(+); that stretch reads TTT. Positions 226 and 230 each coordinate substrate. NAD(+) is bound by residues Asn-231, 260–265, Glu-283, Asn-318, 339–341, and Asn-384; these read GYGDVG and IGH.

This sequence belongs to the adenosylhomocysteinase family. NAD(+) serves as cofactor.

It is found in the cytoplasm. The enzyme catalyses S-adenosyl-L-homocysteine + H2O = L-homocysteine + adenosine. Its pathway is amino-acid biosynthesis; L-homocysteine biosynthesis; L-homocysteine from S-adenosyl-L-homocysteine: step 1/1. Its function is as follows. May play a key role in the regulation of the intracellular concentration of adenosylhomocysteine. In Cupriavidus necator (strain ATCC 17699 / DSM 428 / KCTC 22496 / NCIMB 10442 / H16 / Stanier 337) (Ralstonia eutropha), this protein is Adenosylhomocysteinase.